The following is a 168-amino-acid chain: MPLYEHVFLARQDASTQQVEELTTQITSVIEGLGGKVVKMESWGVRSLTYRMHKNRKAHFVLLNIDGPSAVVAEVERQERINEDVIRYLTVRVDELEEGPSAMMRKADRDRDRDDRGGFRGDREGGFRGDREGGFRGGDREGGGFRGDRGPRRPRDDAAPAPAAATEE.

Residues 97–168 (EEGPSAMMRK…APAPAAATEE (72 aa)) are disordered. Positions 105–158 (RKADRDRDRDDRGGFRGDREGGFRGDREGGFRGGDREGGGFRGDRGPRRPRDDA) are enriched in basic and acidic residues.

Belongs to the bacterial ribosomal protein bS6 family.

In terms of biological role, binds together with bS18 to 16S ribosomal RNA. In Rhodopseudomonas palustris (strain BisB18), this protein is Small ribosomal subunit protein bS6.